The following is a 171-amino-acid chain: MHPFYTRAATMIGEIAAAVSFISKFLRTKGLTSERQLQTFSQSLQELLAEHYKHHWFPEKPCKGSGYRCIRINHKMDPLIGQAAQRIGLSSQELFRLLPSELTLWVDPYEVSYRIGEDGSICVLYEASPAGGSTQNSTNVQMVDSRISCKEELLLGRTSPSKNYNMMTVSG.

Serine 159 bears the Phosphoserine mark.

The protein belongs to the BTG family. As to quaternary structure, interacts with CNOT7 and CNOT8.

In terms of biological role, anti-proliferative protein. This Homo sapiens (Human) protein is Protein BTG1 (BTG1).